The sequence spans 400 residues: Mitogen-activated protein kinase hog1 (400 aa).

In terms of domain architecture, Protein kinase spans 20-299; sequence YVDLNPVGMG…AADALAHPYL (280 aa). Residues 26-34 and K49 each bind ATP; that span reads VGMGAFGLV. The Proton acceptor role is filled by D141. The residue at position 171 (T171) is a Phosphothreonine. A TXY motif is present at residues 171–173; that stretch reads TGY. A Phosphotyrosine modification is found at Y173. Positions 345 to 400 are disordered; that stretch reads SSAVEQQQQQPQPPQPQLQQQQQPPQQPQQPQQPQXAQQPVQPVQGDYVPQVAPRS. A compositionally biased stretch (low complexity) spans 361-389; it reads QLQQQQQPPQQPQQPQQPQXAQQPVQPVQ.

Belongs to the protein kinase superfamily. Ser/Thr protein kinase family. MAP kinase subfamily. HOG1 sub-subfamily. Mg(2+) is required as a cofactor. Dually phosphorylated on Thr-171 and Tyr-173, which activates the enzyme. Phosphorylation is induced by osmotic stress.

Its subcellular location is the cytoplasm. The protein resides in the nucleus. It catalyses the reaction L-seryl-[protein] + ATP = O-phospho-L-seryl-[protein] + ADP + H(+). The catalysed reaction is L-threonyl-[protein] + ATP = O-phospho-L-threonyl-[protein] + ADP + H(+). Activated by tyrosine and threonine phosphorylation. Proline-directed serine/threonine-protein kinase involved in a signal transduction pathway that is activated by changes in the osmolarity of the extracellular environment. Controls osmotic regulation of transcription of target genes. This is Mitogen-activated protein kinase hog1 (hog1) from Blastobotrys adeninivorans (Yeast).